Here is a 384-residue protein sequence, read N- to C-terminus: Carbamoyl phosphate synthase small chain (384 aa).

Positions 1-195 (MLPVLPPALL…LGRGHGTLAD (195 aa)) are CPSase. The L-glutamine site is built by serine 50, glycine 247, and glycine 249. In terms of domain architecture, Glutamine amidotransferase type-1 spans 199–384 (HVVAYDFGVK…RFVALMQERA (186 aa)). The active-site Nucleophile is cysteine 275. Leucine 276, glutamine 279, asparagine 317, glycine 319, and phenylalanine 320 together coordinate L-glutamine. Residues histidine 359 and glutamate 361 contribute to the active site.

This sequence belongs to the CarA family. Composed of two chains; the small (or glutamine) chain promotes the hydrolysis of glutamine to ammonia, which is used by the large (or ammonia) chain to synthesize carbamoyl phosphate. Tetramer of heterodimers (alpha,beta)4.

The catalysed reaction is hydrogencarbonate + L-glutamine + 2 ATP + H2O = carbamoyl phosphate + L-glutamate + 2 ADP + phosphate + 2 H(+). The enzyme catalyses L-glutamine + H2O = L-glutamate + NH4(+). It functions in the pathway amino-acid biosynthesis; L-arginine biosynthesis; carbamoyl phosphate from bicarbonate: step 1/1. It participates in pyrimidine metabolism; UMP biosynthesis via de novo pathway; (S)-dihydroorotate from bicarbonate: step 1/3. In terms of biological role, small subunit of the glutamine-dependent carbamoyl phosphate synthetase (CPSase). CPSase catalyzes the formation of carbamoyl phosphate from the ammonia moiety of glutamine, carbonate, and phosphate donated by ATP, constituting the first step of 2 biosynthetic pathways, one leading to arginine and/or urea and the other to pyrimidine nucleotides. The small subunit (glutamine amidotransferase) binds and cleaves glutamine to supply the large subunit with the substrate ammonia. This Rubrivivax gelatinosus (strain NBRC 100245 / IL144) protein is Carbamoyl phosphate synthase small chain.